Reading from the N-terminus, the 288-residue chain is Homoserine kinase (288 aa).

79 to 89 contributes to the ATP binding site; sequence PPARGLGSSSA.

It belongs to the GHMP kinase family. Homoserine kinase subfamily.

It is found in the cytoplasm. The catalysed reaction is L-homoserine + ATP = O-phospho-L-homoserine + ADP + H(+). It participates in amino-acid biosynthesis; L-threonine biosynthesis; L-threonine from L-aspartate: step 4/5. Its function is as follows. Catalyzes the ATP-dependent phosphorylation of L-homoserine to L-homoserine phosphate. The polypeptide is Homoserine kinase (Listeria innocua serovar 6a (strain ATCC BAA-680 / CLIP 11262)).